Reading from the N-terminus, the 228-residue chain is Probable septum site-determining protein MinC (228 aa).

It belongs to the MinC family. As to quaternary structure, interacts with MinD and FtsZ.

Its function is as follows. Cell division inhibitor that blocks the formation of polar Z ring septums. Rapidly oscillates between the poles of the cell to destabilize FtsZ filaments that have formed before they mature into polar Z rings. Prevents FtsZ polymerization. The chain is Probable septum site-determining protein MinC from Yersinia enterocolitica serotype O:8 / biotype 1B (strain NCTC 13174 / 8081).